A 948-amino-acid polypeptide reads, in one-letter code: Sensor histidine kinase RcsC (948 aa).

Topologically, residues 1–20 (MKYLASFRTTLKVSRYLFRA) are cytoplasmic. A helical transmembrane segment spans residues 21–41 (LALLIWLLIAFVSVFYIVNAL). Over 42 to 313 (HQRESEIRQE…PVDLVLERIR (272 aa)) the chain is Periplasmic. Residues 314 to 334 (ILILNAILLNVLVGAGLFTLA) form a helical membrane-spanning segment. At 335-948 (RMYERRIFIP…YAERVRKTRA (614 aa)) the chain is on the cytoplasmic side. The PAS domain occupies 357 to 425 (QFNRKIVASA…VLTSNNTNLQ (69 aa)). The region spanning 476-692 (TVSHELRTPL…QFTLRIPLYG (217 aa)) is the Histidine kinase domain. His479 bears the Phosphohistidine; by autocatalysis mark. The ABL domain occupies 705–805 (AGTCCWLAVR…ARIYSIELDS (101 aa)). In terms of domain architecture, Response regulatory spans 826–940 (MILVVDDHPI…VLKQTLAVYA (115 aa)). Asp875 carries the post-translational modification 4-aspartylphosphate.

It belongs to the RcsC family. In terms of assembly, interacts with RcsD. Post-translationally, autophosphorylated. Activation probably requires a transfer of a phosphate group from a His in the transmitter domain to an Asp in the receiver domain.

It localises to the cell inner membrane. The catalysed reaction is ATP + protein L-histidine = ADP + protein N-phospho-L-histidine.. Functionally, component of the Rcs signaling system, which controls transcription of numerous genes. RcsC functions as a membrane-associated protein kinase that phosphorylates RcsD in response to environmental signals. The phosphoryl group is then transferred to the response regulator RcsB. This chain is Sensor histidine kinase RcsC, found in Salmonella typhimurium (strain LT2 / SGSC1412 / ATCC 700720).